The following is a 411-amino-acid chain: Acetylornithine aminotransferase, mitochondrial (411 aa).

N6-(pyridoxal phosphate)lysine is present on Lys262.

This sequence belongs to the class-III pyridoxal-phosphate-dependent aminotransferase family. Pyridoxal 5'-phosphate is required as a cofactor.

It is found in the mitochondrion matrix. The catalysed reaction is N(2)-acetyl-L-ornithine + 2-oxoglutarate = N-acetyl-L-glutamate 5-semialdehyde + L-glutamate. Its pathway is amino-acid biosynthesis; L-arginine biosynthesis; N(2)-acetyl-L-ornithine from L-glutamate: step 4/4. This is Acetylornithine aminotransferase, mitochondrial (ARG8) from Yarrowia lipolytica (strain CLIB 122 / E 150) (Yeast).